Consider the following 317-residue polypeptide: Methionyl-tRNA formyltransferase (317 aa).

112 to 115 (SLLP) provides a ligand contact to (6S)-5,6,7,8-tetrahydrofolate.

This sequence belongs to the Fmt family.

The catalysed reaction is L-methionyl-tRNA(fMet) + (6R)-10-formyltetrahydrofolate = N-formyl-L-methionyl-tRNA(fMet) + (6S)-5,6,7,8-tetrahydrofolate + H(+). Its function is as follows. Attaches a formyl group to the free amino group of methionyl-tRNA(fMet). The formyl group appears to play a dual role in the initiator identity of N-formylmethionyl-tRNA by promoting its recognition by IF2 and preventing the misappropriation of this tRNA by the elongation apparatus. In Mycoplasma capricolum subsp. capricolum (strain California kid / ATCC 27343 / NCTC 10154), this protein is Methionyl-tRNA formyltransferase.